A 445-amino-acid polypeptide reads, in one-letter code: KICSTOR subunit 2 (445 aa).

This sequence belongs to the KICS2 family. In terms of assembly, part of the KICSTOR complex composed of KPTN, ITFG2, KICS2 and SZT2. SZT2 probably serves as a link between the other three proteins in the KICSTOR complex and may mediate the direct interaction with the GATOR complex via GATOR1. The KICSTOR complex interacts directly with the GATOR1 complex and most probably indirectly with the GATOR2 complex in an amino acid-independent manner.

Its subcellular location is the lysosome membrane. Functionally, as part of the KICSTOR complex functions in the amino acid-sensing branch of the TORC1 signaling pathway. Recruits, in an amino acid-independent manner, the GATOR1 complex to the lysosomal membranes and allows its interaction with GATOR2 and the RAG GTPases. Functions upstream of the RAG GTPases and is required to negatively regulate mTORC1 signaling in absence of amino acids. In absence of the KICSTOR complex mTORC1 is constitutively localized to the lysosome and activated. The KICSTOR complex is also probably involved in the regulation of mTORC1 by glucose. This Homo sapiens (Human) protein is KICSTOR subunit 2.